A 422-amino-acid chain; its full sequence is Putative nickel insertion protein (422 aa).

It belongs to the LarC family.

The protein is Putative nickel insertion protein of Synechocystis sp. (strain ATCC 27184 / PCC 6803 / Kazusa).